Consider the following 100-residue polypeptide: NADH-quinone oxidoreductase subunit K (100 aa).

3 helical membrane-spanning segments follow: residues 4-24, 28-48, and 60-80; these read LQHGLILAAILFALGLTGLLI, LLFMLISLEIMINAAALAFVV, and VMYILAISLAAAEASIGLALL.

The protein belongs to the complex I subunit 4L family. As to quaternary structure, NDH-1 is composed of 13 different subunits. Subunits NuoA, H, J, K, L, M, N constitute the membrane sector of the complex.

The protein localises to the cell inner membrane. The enzyme catalyses a quinone + NADH + 5 H(+)(in) = a quinol + NAD(+) + 4 H(+)(out). NDH-1 shuttles electrons from NADH, via FMN and iron-sulfur (Fe-S) centers, to quinones in the respiratory chain. The immediate electron acceptor for the enzyme in this species is believed to be ubiquinone. Couples the redox reaction to proton translocation (for every two electrons transferred, four hydrogen ions are translocated across the cytoplasmic membrane), and thus conserves the redox energy in a proton gradient. The polypeptide is NADH-quinone oxidoreductase subunit K (Edwardsiella ictaluri (strain 93-146)).